A 341-amino-acid polypeptide reads, in one-letter code: Eukaryotic translation initiation factor 2 subunit 1 (341 aa).

In terms of domain architecture, S1 motif spans 18-89; it reads NELVMVRIES…DKGYIDLSKR (72 aa). A disordered region spans residues 301–341; it reads LMEQLEVENQDGDGEEHEDDDDDDDDEEEEEKPKEKKSSRK. Acidic residues predominate over residues 303–330; it reads EQLEVENQDGDGEEHEDDDDDDDDEEEE. Residues 331–341 are compositionally biased toward basic and acidic residues; sequence EKPKEKKSSRK.

This sequence belongs to the eIF-2-alpha family. In terms of assembly, eukaryotic translation initiation factor 2 eIF2 is a heterotrimeric complex composed of an alpha, a beta and a gamma subunit.

The protein resides in the cytoplasm. The protein localises to the cytosol. Functionally, eIF-2 functions in the early steps of protein synthesis by forming a ternary complex with GTP and initiator tRNA. This complex binds to a 40S ribosomal subunit, followed by mRNA binding to form a 43S pre-initiation complex. Junction of the 60S ribosomal subunit to form the 80S initiation complex is preceded by hydrolysis of the GTP bound to eIF-2 and release of an eIF-2-GDP binary complex. In order for eIF-2 to recycle and catalyze another round of initiation, the GDP bound to eIF-2 must exchange with GTP by way of a reaction catalyzed by eIF2B. This chain is Eukaryotic translation initiation factor 2 subunit 1 (eif2s1), found in Dictyostelium discoideum (Social amoeba).